We begin with the raw amino-acid sequence, 166 residues long: Probable glucosamine 6-phosphate N-acetyltransferase 2 (166 aa).

The 146-residue stretch at 21–166 (VQIRRLEATD…EKGVQMAIYF (146 aa)) folds into the N-acetyltransferase domain. Residues serine 43, 93–96 (KFLR), and 105–107 (EDV) each bind substrate. Position 115–120 (115–120 (GRGLGL)) interacts with acetyl-CoA. 136–137 (YK) is a binding site for substrate. An acetyl-CoA-binding site is contributed by 150–152 (YAK).

Belongs to the acetyltransferase family. GNA1 subfamily. In terms of assembly, homodimer.

The protein localises to the endoplasmic reticulum membrane. It carries out the reaction D-glucosamine 6-phosphate + acetyl-CoA = N-acetyl-D-glucosamine 6-phosphate + CoA + H(+). It functions in the pathway nucleotide-sugar biosynthesis; UDP-N-acetyl-alpha-D-glucosamine biosynthesis; N-acetyl-alpha-D-glucosamine 1-phosphate from alpha-D-glucosamine 6-phosphate (route I): step 1/2. Its function is as follows. Acetyltransferase involved in UDP-N-acetylglucosamine (UDP-GlcNAc) biosynthesis. UDP-GlcNAc is an essential metabolite that serves as an initial sugar donor of N-glycan synthesis and thus plays an important role in protein and lipid glycosylation. This is Probable glucosamine 6-phosphate N-acetyltransferase 2 from Oryza sativa subsp. japonica (Rice).